The following is a 459-amino-acid chain: Argininosuccinate lyase (459 aa).

The protein belongs to the lyase 1 family. Argininosuccinate lyase subfamily.

It localises to the cytoplasm. The enzyme catalyses 2-(N(omega)-L-arginino)succinate = fumarate + L-arginine. The protein operates within amino-acid biosynthesis; L-arginine biosynthesis; L-arginine from L-ornithine and carbamoyl phosphate: step 3/3. In Bacillus licheniformis (strain ATCC 14580 / DSM 13 / JCM 2505 / CCUG 7422 / NBRC 12200 / NCIMB 9375 / NCTC 10341 / NRRL NRS-1264 / Gibson 46), this protein is Argininosuccinate lyase.